Consider the following 1402-residue polypeptide: Erbin (1402 aa).

LRR repeat units follow at residues 23–44, 47–68, 70–91, 93–114, 116–137, 139–161, 162–183, 185–206, 208–229, 231–252, 254–275, 277–298, 300–321, 323–344, 346–367, 369–391, and 392–413; these read TVTTLDYSHCSLEQVPKEIFTF, TLEELYLDANQIEELPKQLFNC, SLHKLSLPDNDLTTLPASIANL, NLRELDVSKNGIQEFPENIKNC, VLTIVEASVNPISKLPDGFSQL, NLTQLYLNDAFLEFLPANFGRLT, KLQILELRENQLKMLPKTMNRL, QLERLDLGSNEFTEVPEVLEQL, GLREFWMDGNRLTFIPGFIGSL, QLTYLDVSKNNIEMVEEGISTC, NLQDFLLSSNSLQQLPETIGSL, NVTTLKIDENQLMYLPDSIGGL, SIEELDCSFNEIEALPSSIGQL, NMRTFAADHNYLQQLPPEIGNW, NITVLFLHCNKLETLPEEMGDM, KLKVINLSDNRLKNLPFSFTKLQ, and QLTAMWLSDNQSKPLIPLQKET. Phosphoserine occurs at positions 440 and 444. Disordered regions lie at residues 465-489 and 507-543; these read DEDKDEREAPPREGNLKRYPTPYPD and DEETNEESGRDLKQHEDQQVVNKDKCVKTSESTTTKS. Residues 470-480 are compositionally biased toward basic and acidic residues; it reads EREAPPREGNL. Position 483 is a phosphotyrosine (tyrosine 483). Threonine 485 is modified (phosphothreonine). Residues 507-534 are compositionally biased toward basic and acidic residues; that stretch reads DEETNEESGRDLKQHEDQQVVNKDKCVK. A phosphoserine mark is found at serine 595, serine 599, serine 600, and serine 617. Residues 629 to 638 show a composition bias toward basic and acidic residues; it reads NKKDDAKDAD. The tract at residues 629-694 is disordered; that stretch reads NKKDDAKDAD…PVDSNSKVRQ (66 aa). Positions 647-659 are enriched in low complexity; sequence NSNQNNSNCSSPS. The span at 660-689 shows a compositional bias: polar residues; the sequence is RMSDSVSLNTDSSQDTSLCSPVKQTPVDSN. 4 positions are modified to phosphoserine: serine 712, serine 849, serine 854, and serine 869. The disordered stretch occupies residues 824-864; it reads EDTAPSPGRVEPQKASSSADVGISKSTEDLSPQRSGPTGAV. Threonine 914 is modified (phosphothreonine). A Phosphotyrosine modification is found at tyrosine 917. Phosphoserine is present on serine 928. Tyrosine 970 bears the Phosphotyrosine mark. Disordered stretches follow at residues 990 to 1018 and 1070 to 1093; these read WHPKQNPQIDPVSFPPQRLPRSESAENHS and TTIQRQSSVSSTASVNLGDPTRRT. The segment covering 1070–1084 has biased composition (polar residues); it reads TTIQRQSSVSSTASV. Tyrosine 1097 is subject to Phosphotyrosine. Disordered regions lie at residues 1107–1187, 1198–1217, and 1222–1274; these read GRTP…VPHD, AKKLEKHPQTSSPGECCQDD, and EEQN…VARH. Composition is skewed to polar residues over residues 1128 to 1139 and 1149 to 1164; these read GPNTSRPQSARP and MSVSDFNYSRTSPSKR. 2 positions are modified to phosphoserine: serine 1150 and serine 1171. 3 positions are modified to phosphoserine: leucine 1231, arginine 1234, and serine 1276. The PDZ domain maps to 1311–1400; it reads EIRVRVEKDP…AVDLIIVREV (90 aa).

Belongs to the LAP (LRR and PDZ) protein family. In terms of assembly, interacts with ERBB2, BPAG1 and ITGB4. May favor the localization of ERBB2, by restricting its presence to the basolateral membrane of epithelial cells. Also found to interact with ARVCF and delta catenin. Interacts (via C-terminus) with DST (via N-terminus). Interacts with NOD2 (via CARD domain). Post-translationally, isoform 2 is phosphorylated on Ser-1231 and Ser-1234.

The protein localises to the cell junction. The protein resides in the hemidesmosome. It localises to the nucleus membrane. It is found in the basolateral cell membrane. In terms of biological role, acts as an adapter for the receptor ERBB2, in epithelia. By binding the unphosphorylated ERBB2 'Tyr-1248' receptor, it may contribute to stabilize this unphosphorylated state. Inhibits NOD2-dependent NF-kappa-B signaling and pro-inflammatory cytokine secretion. The chain is Erbin from Mus musculus (Mouse).